The primary structure comprises 229 residues: Cytochrome c oxidase subunit 2 (229 aa).

Over 1-26 (MSTWANLGLQDSASPLMEQLIFFHDH) the chain is Mitochondrial intermembrane. Residues 27–48 (ALLILVMITVLVGYLMFMLFFN) form a helical membrane-spanning segment. Residues 49-62 (SYVNRFLLHGQLIE) are Mitochondrial matrix-facing. Residues 63-82 (MIWTILPAIILLFIAMPSLR) traverse the membrane as a helical segment. Over 83-229 (LLYLLDEINE…IKWISNSVNS (147 aa)) the chain is Mitochondrial intermembrane. Positions 161, 196, 198, 200, 204, and 207 each coordinate Cu cation. Glu-198 contributes to the Mg(2+) binding site.

Belongs to the cytochrome c oxidase subunit 2 family. Component of the cytochrome c oxidase (complex IV, CIV), a multisubunit enzyme composed of a catalytic core of 3 subunits and several supernumerary subunits. The complex exists as a monomer or a dimer and forms supercomplexes (SCs) in the inner mitochondrial membrane with ubiquinol-cytochrome c oxidoreductase (cytochrome b-c1 complex, complex III, CIII). It depends on Cu cation as a cofactor.

The protein localises to the mitochondrion inner membrane. The enzyme catalyses 4 Fe(II)-[cytochrome c] + O2 + 8 H(+)(in) = 4 Fe(III)-[cytochrome c] + 2 H2O + 4 H(+)(out). In terms of biological role, component of the cytochrome c oxidase, the last enzyme in the mitochondrial electron transport chain which drives oxidative phosphorylation. The respiratory chain contains 3 multisubunit complexes succinate dehydrogenase (complex II, CII), ubiquinol-cytochrome c oxidoreductase (cytochrome b-c1 complex, complex III, CIII) and cytochrome c oxidase (complex IV, CIV), that cooperate to transfer electrons derived from NADH and succinate to molecular oxygen, creating an electrochemical gradient over the inner membrane that drives transmembrane transport and the ATP synthase. Cytochrome c oxidase is the component of the respiratory chain that catalyzes the reduction of oxygen to water. Electrons originating from reduced cytochrome c in the intermembrane space (IMS) are transferred via the dinuclear copper A center (CU(A)) of subunit 2 and heme A of subunit 1 to the active site in subunit 1, a binuclear center (BNC) formed by heme A3 and copper B (CU(B)). The BNC reduces molecular oxygen to 2 water molecules using 4 electrons from cytochrome c in the IMS and 4 protons from the mitochondrial matrix. In Drosophila affinis (Fruit fly), this protein is Cytochrome c oxidase subunit 2 (mt:CoII).